The sequence spans 151 residues: Transcriptional regulator SyrB (151 aa).

The interval 1-61 (MADESNTGPV…RYSEQERNDK (61 aa)) is disordered. Positions 33–48 (PQKAAAEPAQPKAPAA) are enriched in low complexity. Residues 52 to 61 (RYSEQERNDK) show a composition bias toward basic and acidic residues.

This sequence belongs to the SyrB family.

Responsible for the repression of SyrM activity. This Rhizobium meliloti (strain 1021) (Ensifer meliloti) protein is Transcriptional regulator SyrB (syrB).